We begin with the raw amino-acid sequence, 89 residues long: Small ribosomal subunit protein uS14 (89 aa).

Belongs to the universal ribosomal protein uS14 family. In terms of assembly, part of the 30S ribosomal subunit. Contacts proteins S3 and S10.

In terms of biological role, binds 16S rRNA, required for the assembly of 30S particles and may also be responsible for determining the conformation of the 16S rRNA at the A site. This chain is Small ribosomal subunit protein uS14, found in Chlorobaculum tepidum (strain ATCC 49652 / DSM 12025 / NBRC 103806 / TLS) (Chlorobium tepidum).